The primary structure comprises 160 residues: MGEIAIRLLVTGGKATPGPPIGPALSPFKINPGKVVAEINKLTKEYEGLPVPVEIIINPETKEYKIIVGLPPTSALLMKAAGVTRGPQRTVHEWVGNVSMKDVVEIAKKKIDSMPTSSLKAAVKSVLGTARATGIKVENKDPKEVTKEVDEGKWDHIINE.

It belongs to the universal ribosomal protein uL11 family. In terms of assembly, part of the ribosomal stalk of the 50S ribosomal subunit. Interacts with L10 and the large rRNA to form the base of the stalk. L10 forms an elongated spine to which L12 dimers bind in a sequential fashion forming a multimeric L10(L12)X complex.

Forms part of the ribosomal stalk which helps the ribosome interact with GTP-bound translation factors. The protein is Large ribosomal subunit protein uL11 of Nanoarchaeum equitans (strain Kin4-M).